Consider the following 123-residue polypeptide: Non-specific lipid-transfer protein 3 (123 aa).

The signal sequence occupies residues 1–25 (MASSGQLLKLVCLVAVMCCMAVGGP). 4 disulfide bridges follow: Cys33–Cys80, Cys43–Cys57, Cys58–Cys105, and Cys78–Cys119.

The protein belongs to the plant LTP family.

In terms of biological role, plant non-specific lipid-transfer proteins transfer phospholipids as well as galactolipids across membranes. May play a role in wax or cutin deposition in the cell walls of expanding epidermal cells and certain secretory tissues. In Prunus dulcis (Almond), this protein is Non-specific lipid-transfer protein 3.